Here is a 369-residue protein sequence, read N- to C-terminus: Glutamate 5-kinase (369 aa).

Lys8 is a binding site for ATP. 3 residues coordinate substrate: Ser49, Asp136, and Asn148. ATP-binding positions include 168 to 169 (TD) and 212 to 218 (TGGMMTK). One can recognise a PUA domain in the interval 277 to 355 (TGKLYLDSGA…KEISTILGYV (79 aa)).

The protein belongs to the glutamate 5-kinase family.

The protein localises to the cytoplasm. It catalyses the reaction L-glutamate + ATP = L-glutamyl 5-phosphate + ADP. The protein operates within amino-acid biosynthesis; L-proline biosynthesis; L-glutamate 5-semialdehyde from L-glutamate: step 1/2. Catalyzes the transfer of a phosphate group to glutamate to form L-glutamate 5-phosphate. This is Glutamate 5-kinase from Trichormus variabilis (strain ATCC 29413 / PCC 7937) (Anabaena variabilis).